Here is a 1170-residue protein sequence, read N- to C-terminus: DNA excision repair protein ERCC-5 (1170 aa).

Positions 1–78 are N-domain; it reads MGVQGLWKLL…RIRPIFVFDG (78 aa). Lys-8 carries the post-translational modification N6-acetyllysine. Asp-30 serves as a coordination point for Mg(2+). Residues 31-67 form a DNA-binding; may bind to the undamaged single-strand DNA of the DNA repair bubble region; sequence ISIWLNQALKGVRDSHGNVIENAHLLTLFHRLCKLLF. Asp-77 is a Mg(2+) binding site. The interval 79 to 784 is spacer region; that stretch reads DAPLLKKQTL…LRLFGVPYIQ (706 aa). Disordered regions lie at residues 304–479, 520–587, and 600–701; these read DSES…RCDT, HVSG…PKAC, and LENA…ECLL. Positions 306–323 are enriched in low complexity; sequence ESLPSSSNVHSVSSNLKS. 2 stretches are compositionally biased toward basic and acidic residues: residues 324–336 and 363–373; these read SPHE…REPE and SREGRQSKERN. At Ser-384 the chain carries Phosphoserine. Residues 455–474 show a composition bias toward polar residues; sequence TSGSSANGQTDSAHSFTTAS. The span at 539–551 shows a compositional bias: basic and acidic residues; sequence THSDQGIDIHPED. Positions 659 to 676 are enriched in polar residues; sequence SVVSNSELQTESSEASTH. Positions 677 to 698 are enriched in basic and acidic residues; sequence LSEKDAEEPRETLEEGTSRDTE. Residues Ser-704 and Ser-705 each carry the phosphoserine modification. Residues 785 to 880 form an I-domain region; the sequence is APMEAEAQCA…VTAMEILNEF (96 aa). Positions 788, 790, 809, and 811 each coordinate Mg(2+). A DNA-binding; may bind to the undamaged single-strand DNA of the DNA repair bubble region spans residues 819-835; it reads HVYKNFFNKNKFVEYYQ. Residues 847 to 879 form a DNA-binding; H2TH (helix-2turn-helix) motif which binds double-stranded DNA region; it reads RNKLINLAYLLGSDYTEGIPTVGCVTAMEILNE. Position 860 (Asp-860) interacts with Mg(2+). A DNA-binding; may bind double-stranded DNA region spans residues 911–917; that stretch reads TKVKKKL. Positions 980–1008 are interaction with PCNA; sequence LKHLNAHQTQLRIDSFFRLAQQEKQDAKL. The interaction with ERCC6/CSB stretch occupies residues 1010-1170; it reads KSHRLNRAVT…KSMKRRKKKT (161 aa). The interval 1033-1146 is disordered; sequence LTKVTEALDD…DDEDKAKTVL (114 aa). Over residues 1041-1060 the composition is skewed to basic and acidic residues; that stretch reads DDAKGKTQKRELPYKKETSV. Residues 1049–1065 carry the Nuclear localization signal 1 motif; the sequence is KRELPYKKETSVPKRRR. Residues 1094–1110 show a composition bias toward polar residues; that stretch reads SVMSARQRSAAESSKIS. A Nuclear localization signal 2 motif is present at residues 1153–1170; that stretch reads FGKKKLKLKSMKRRKKKT.

Belongs to the XPG/RAD2 endonuclease family. XPG subfamily. In terms of assembly, monomer. Homodimer. Component of the homologous recombination repair (HR) complex composed of ERCC5/XPG, BRCA2, PALB2, DSS1 and RAD51. Within the complex, interacts with BRCA2 and PALB2. Interacts with RNA polymerase II. Interacts (via C-terminus) with ERCC6/CSB; the interaction stimulates ERCC6/CSB binding to the DNA repair bubble and ERCC6/CSB ATPase activity. May form a complex composed of RNA polymerase II, ERCC6/CSB and ERCC5/XPG which associates with the DNA repair bubble during transcription-coupled nucleotide excision repair. Interacts with BRCA1; the interaction promotes the release of BRCA1 from DNA. Interacts with PCNA. Interacts with NTHL1; the interaction stimulates NTHL1 activity and NTHL1 binding to its DNA substrate. Mg(2+) is required as a cofactor.

The protein localises to the nucleus. It is found in the chromosome. Single-stranded structure-specific DNA endonuclease involved in DNA excision repair. Makes the 3'incision in DNA nucleotide excision repair (NER). Binds and bends DNA repair bubble substrate and breaks base stacking at the single-strand/double-strand DNA junction of the DNA bubble. Plays a role in base excision repair (BER) by promoting the binding of DNA glycosylase NTHL1 to its substrate and increasing NTHL1 catalytic activity that removes oxidized pyrimidines from DNA. Involved in transcription-coupled nucleotide excision repair (TCR) which allows RNA polymerase II-blocking lesions to be rapidly removed from the transcribed strand of active genes. Functions during the initial step of TCR in cooperation with ERCC6/CSB to recognized stalled RNA polymerase II. Also, stimulates ERCC6/CSB binding to the DNA repair bubble and ERCC6/CSB ATPase activity. Required for DNA replication fork maintenance and preservation of genomic stability. Involved in homologous recombination repair (HRR) induced by DNA replication stress by recruiting RAD51, BRCA2, and PALB2 to the damaged DNA site. During HRR, binds to the replication fork with high specificity and stabilizes it. Also, acts upstream of HRR, to promote the release of BRCA1 from DNA. The sequence is that of DNA excision repair protein ERCC-5 (Ercc5) from Mus musculus (Mouse).